Reading from the N-terminus, the 216-residue chain is Thymidylate kinase (216 aa).

Residue 10–17 participates in ATP binding; it reads GPDGAGKS.

Belongs to the thymidylate kinase family.

It catalyses the reaction dTMP + ATP = dTDP + ADP. Functionally, phosphorylation of dTMP to form dTDP in both de novo and salvage pathways of dTTP synthesis. The protein is Thymidylate kinase of Lactobacillus acidophilus (strain ATCC 700396 / NCK56 / N2 / NCFM).